A 227-amino-acid polypeptide reads, in one-letter code: uncharacterized protein (227 aa).

The next 5 helical transmembrane spans lie at 27–47, 63–83, 126–146, 153–173, and 186–206; these read AVLP…FPLL, PAPP…AVLG, TIIL…IAGV, VFLG…TLAG, and FQLI…VSAA.

The protein belongs to the DedA family.

The protein resides in the cell membrane. This is an uncharacterized protein from Mycobacterium tuberculosis (strain CDC 1551 / Oshkosh).